Reading from the N-terminus, the 361-residue chain is Biotin synthase (361 aa).

The Radical SAM core domain occupies 47–278; it reads VHGDEVALCG…AAHIFVMGGR (232 aa). Cysteine 65, cysteine 69, and cysteine 72 together coordinate [4Fe-4S] cluster. [2Fe-2S] cluster contacts are provided by serine 110, cysteine 143, and cysteine 203.

This sequence belongs to the radical SAM superfamily. Biotin synthase family. Homodimer. It depends on [4Fe-4S] cluster as a cofactor. Requires [2Fe-2S] cluster as cofactor.

The catalysed reaction is (4R,5S)-dethiobiotin + (sulfur carrier)-SH + 2 reduced [2Fe-2S]-[ferredoxin] + 2 S-adenosyl-L-methionine = (sulfur carrier)-H + biotin + 2 5'-deoxyadenosine + 2 L-methionine + 2 oxidized [2Fe-2S]-[ferredoxin]. It functions in the pathway cofactor biosynthesis; biotin biosynthesis; biotin from 7,8-diaminononanoate: step 2/2. Functionally, catalyzes the conversion of dethiobiotin (DTB) to biotin by the insertion of a sulfur atom into dethiobiotin via a radical-based mechanism. The chain is Biotin synthase from Anaeromyxobacter dehalogenans (strain 2CP-C).